The sequence spans 348 residues: N-formyl peptide receptor 2 (348 aa).

Asparagine 1 is a glycosylation site (N-linked (GlcNAc...) asparagine). The Extracellular segment spans residues 1-24 (NFSTPLNEHEEVSYESAGYTVLQI). A helical transmembrane segment spans residues 25–47 (LPLVVLGVTFVLGVLGNGLVIWV). Residues 48-58 (AGFRMTRTVTT) lie on the Cytoplasmic side of the membrane. Residues 59–80 (ICYLNLPLADFSFTATLPFLIV) traverse the membrane as a helical segment. The Extracellular portion of the chain corresponds to 81-97 (SMAMGEKWPFGWFLCKL). A disulfide bond links cysteine 95 and cysteine 173. A helical membrane pass occupies residues 98 to 118 (IHIVVDINLFGSVFLIGFIAL). Residues 119 to 137 (DRCICVLHPVWAQNHRTVS) lie on the Cytoplasmic side of the membrane. Residues 138–159 (LAMKVIIGPWILALVLTLPVFL) form a helical membrane-spanning segment. Residues 160–202 (FLTTVTIPNGDTYCTFNFASWGGTPEERKNVAITMLTARGIIR) lie on the Extracellular side of the membrane. Residues 203-223 (FVIGFSMPMSIVAICYGLIAA) traverse the membrane as a helical segment. Over 224–239 (KIHKKGMIKSSRPLRV) the chain is Cytoplasmic. The helical transmembrane segment at 240 to 263 (LTAVVASFFICWFPFQLVALLSTV) threads the bilayer. At 264-283 (WLKEMLFYGKYKIINILVNP) the chain is on the extracellular side. Residues 284 to 303 (TSSLAFFNSCLNPMLYVFVG) form a helical membrane-spanning segment. Topologically, residues 304 to 348 (QDFRERLIRSLPTSLERALSEDSAPTNDTAAKCASPPAETELQAM) are cytoplasmic. Residues 323–348 (SEDSAPTNDTAAKCASPPAETELQAM) are disordered.

It belongs to the G-protein coupled receptor 1 family. Interacts with APP; the interaction takes place at the cell surface and the complex is then rapidly internalized.

It is found in the cell membrane. Low affinity receptor for N-formyl-methionyl peptides, which are powerful neutrophil chemotactic factors. Binding of FMLP to the receptor causes activation of neutrophils. This response is mediated via a G-protein that activates a phosphatidylinositol-calcium second messenger system. Receptor for the chemokine-like protein FAM19A5, mediating FAM19A5-stimulated macrophage chemotaxis and the inhibitory effect on TNFSF11/RANKL-induced osteoclast differentiation. This chain is N-formyl peptide receptor 2 (FPR2), found in Pongo pygmaeus (Bornean orangutan).